The primary structure comprises 302 residues: Transmembrane protein 191 (302 aa).

A coiled-coil region spans residues 5-147 (QEQLLQLQKD…HLELAEAKFS (143 aa)). Residues 39 to 66 (LTGRLEELRERERSLQRRRSQASRAIRG) are disordered. Basic and acidic residues predominate over residues 42–53 (RLEELRERERSL). Residues 242–262 (LQTLLLLPLGFLVLPLIYVVL) traverse the membrane as a helical segment.

This sequence belongs to the TMEM191 family.

It is found in the membrane. This is Transmembrane protein 191 from Mus musculus (Mouse).